The primary structure comprises 83 residues: Apolipoprotein C-I, basic form (83 aa).

The signal sequence occupies residues 1 to 26 (MRLFLSLPVLVVVLSMVLEGPAPAQG).

It belongs to the apolipoprotein C1 family.

It localises to the secreted. Inhibitor of lipoprotein binding to the low density lipoprotein (LDL) receptor, LDL receptor-related protein, and very low density lipoprotein (VLDL) receptor. Associates with high density lipoproteins (HDL) and the triacylglycerol-rich lipoproteins in the plasma and makes up about 10% of the protein of the VLDL and 2% of that of HDL. Appears to interfere directly with fatty acid uptake and is also the major plasma inhibitor of cholesteryl ester transfer protein (CETP). Binds free fatty acids and reduces their intracellular esterification. Modulates the interaction of APOE with beta-migrating VLDL and inhibits binding of beta-VLDL to the LDL receptor-related protein. This is Apolipoprotein C-I, basic form (APOC1B) from Colobus guereza (Mantled guereza).